Here is a 760-residue protein sequence, read N- to C-terminus: Histone-lysine N-methyltransferase EZH2 (760 aa).

Disordered regions lie at residues 208–231 (KDDA…SKKF) and 356–444 (PERA…PENV). Positions 361–373 (TPSKRSTGRRRGR) are enriched in basic residues. The segment covering 375 to 388 (PNSNSRPSTPTVNS) has biased composition (polar residues). Basic and acidic residues predominate over residues 389-400 (ETKDTDSDREGG). The CXC domain maps to 517 to 619 (CRKIQLKKDG…SKNVSCKNCS (103 aa)). The SET domain occupies 626–741 (KHLLLAPSDV…TGEELFFDYR (116 aa)).

The protein belongs to the class V-like SAM-binding methyltransferase superfamily. Histone-lysine methyltransferase family. EZ subfamily. In terms of assembly, component of the prc2/eed-ezh2 complex.

It is found in the nucleus. It catalyses the reaction L-lysyl(27)-[histone H3] + 3 S-adenosyl-L-methionine = N(6),N(6),N(6)-trimethyl-L-lysyl(27)-[histone H3] + 3 S-adenosyl-L-homocysteine + 3 H(+). Polycomb group (PcG) protein. Catalytic subunit of the prc2/eed-ezh2 complex, which methylates 'Lys-9' and 'Lys-27' of histone H3, leading to transcriptional repression of the affected target gene. May regulate the circadian clock via histone methylation at the promoter of the circadian genes. The chain is Histone-lysine N-methyltransferase EZH2 (ezh2) from Danio rerio (Zebrafish).